Reading from the N-terminus, the 189-residue chain is Putative biopolymer transport protein ExbB-like 1 (189 aa).

3 helical membrane passes run 14–34 (FVTT…LWVF), 99–119 (LVVL…GTVV), and 147–167 (LIAT…YLIL).

It belongs to the ExbB/TolQ family.

It is found in the cell inner membrane. This Helicobacter pylori (strain J99 / ATCC 700824) (Campylobacter pylori J99) protein is Putative biopolymer transport protein ExbB-like 1.